The chain runs to 369 residues: tRNA 2-selenouridine synthase (369 aa).

A Rhodanese domain is found at phenylalanine 15–glutamate 138. Catalysis depends on cysteine 98, which acts as the S-selanylcysteine intermediate.

It belongs to the SelU family. In terms of assembly, monomer.

The catalysed reaction is 5-methylaminomethyl-2-thiouridine(34) in tRNA + selenophosphate + (2E)-geranyl diphosphate + H2O + H(+) = 5-methylaminomethyl-2-selenouridine(34) in tRNA + (2E)-thiogeraniol + phosphate + diphosphate. The enzyme catalyses 5-methylaminomethyl-2-thiouridine(34) in tRNA + (2E)-geranyl diphosphate = 5-methylaminomethyl-S-(2E)-geranyl-thiouridine(34) in tRNA + diphosphate. It carries out the reaction 5-methylaminomethyl-S-(2E)-geranyl-thiouridine(34) in tRNA + selenophosphate + H(+) = 5-methylaminomethyl-2-(Se-phospho)selenouridine(34) in tRNA + (2E)-thiogeraniol. It catalyses the reaction 5-methylaminomethyl-2-(Se-phospho)selenouridine(34) in tRNA + H2O = 5-methylaminomethyl-2-selenouridine(34) in tRNA + phosphate. Involved in the post-transcriptional modification of the uridine at the wobble position (U34) of tRNA(Lys), tRNA(Glu) and tRNA(Gln). Catalyzes the conversion of 2-thiouridine (S2U-RNA) to 2-selenouridine (Se2U-RNA). Acts in a two-step process involving geranylation of 2-thiouridine (S2U) to S-geranyl-2-thiouridine (geS2U) and subsequent selenation of the latter derivative to 2-selenouridine (Se2U) in the tRNA chain. This chain is tRNA 2-selenouridine synthase, found in Shewanella sp. (strain W3-18-1).